The following is a 480-amino-acid chain: Glycogen synthase (480 aa).

Lysine 15 serves as a coordination point for ADP-alpha-D-glucose.

The protein belongs to the glycosyltransferase 1 family. Bacterial/plant glycogen synthase subfamily.

The catalysed reaction is [(1-&gt;4)-alpha-D-glucosyl](n) + ADP-alpha-D-glucose = [(1-&gt;4)-alpha-D-glucosyl](n+1) + ADP + H(+). It participates in glycan biosynthesis; glycogen biosynthesis. Synthesizes alpha-1,4-glucan chains using ADP-glucose. The polypeptide is Glycogen synthase (Pasteurella multocida (strain Pm70)).